A 330-amino-acid polypeptide reads, in one-letter code: Zinc finger protein sdz-12 (330 aa).

C2H2-type zinc fingers lie at residues 27 to 48, 63 to 85, 91 to 113, 120 to 144, and 153 to 176; these read PQCQ…HMKH, FRCE…QITH, KKCS…LHNH, FDCP…LVNH, and APCG…HFDH. Over residues 183–195 the composition is skewed to low complexity; that stretch reads SAPAPTSSARLSP. Residues 183-203 form a disordered region; sequence SAPAPTSSARLSPITVSTSGS. The C2H2-type 6 zinc-finger motif lies at 271 to 293; that stretch reads FECKHCTIKFHDATMSIMHNALH.

Belongs to the krueppel C2H2-type zinc-finger protein family. In terms of tissue distribution, expressed in the somatic gonad.

Functionally, together with ehn-3, may play a role in gonadogenesis. The protein is Zinc finger protein sdz-12 of Caenorhabditis elegans.